The following is a 733-amino-acid chain: MATKFPKFSQALAQDPATRRIWYGIATAHDLEAHDGMTEENLYQKIFASHFGHLAVIFLWTAGNLFHVAWQGNFEQWVAKPLKVRPIAHSIWDPHFGESALKAFSKGNTYPVNIAFSGVYQWWYTIGFRTNQELYLGSVGLLLLSCALLFAGWLHLQPKFRPSLSWFKNNESRLNHHLSGLMGVSSLAWTGHLVHVALPASRGVHVGWDNFLTTPPHPAGLTPFFTGNWTVYAQNPDSPSHVYGTSEGAGTRILTFLGGFHPQTQSLWLSDIAHHQLAIAFVFIIAGHMYRTNFGIGHNMKEILDAHRPPGGRLGAGHVGLFETITNSLHIQLGLALACLGVATSLTAQHMYALTPYAYLSKDFTTEAALYTHHQYIAGFLMVGAFAHGAIFFVRDYDPELNKNNVLARMLEHKEAIISHLSWASLFLGFHVLGLYIHNDTVVAFGQPEKQILFEPLFAEYIQAASGKAVYNFNVLLSSSTNPATIAGNQVWLPGWLEAINNSKTDLFLKIGPGDFLVHHAIALGLHVTTLILVKGALDARGSKLMPDKKDFGYSFPCDGPGRGGTCDISAWDAFYLAMFWMLNTIGWVTFYWHWKHMTIWGGNPGQFDESSNYIMGWLRDYLWLNSSPLINGYNPFGMNNLSVWAWMFLFGHLIWATGFMFLISWRGYWQELIETLVWAHERTPLANLIRWRDKPVALSIVQARLVGLVHFAVGYILTYAAFVIASTSGKFA.

8 helical membrane-spanning segments follow: residues 46–69 (IFASHFGHLAVIFLWTAGNLFHVA), 134–157 (LYLGSVGLLLLSCALLFAGWLHLQ), 174–198 (LNHHLSGLMGVSSLAWTGHLVHVAL), 272–290 (IAHHQLAIAFVFIIAGHMY), 329–352 (LHIQLGLALACLGVATSLTAQHMY), 368–394 (AALYTHHQYIAGFLMVGAFAHGAIFFV), 416–438 (AIISHLSWASLFLGFHVLGLYIH), and 516–534 (FLVHHAIALGLHVTTLILV). Residues C558 and C567 each coordinate [4Fe-4S] cluster. 2 helical membrane-spanning segments follow: residues 574 to 595 (AFYLAMFWMLNTIGWVTFYWHW) and 642 to 664 (LSVWAWMFLFGHLIWATGFMFLI). The chlorophyll a site is built by H653, M661, and Y669. W670 serves as a coordination point for phylloquinone. Residues 706 to 726 (LVGLVHFAVGYILTYAAFVIA) traverse the membrane as a helical segment.

Belongs to the PsaA/PsaB family. As to quaternary structure, the PsaA/B heterodimer binds the P700 chlorophyll special pair and subsequent electron acceptors. PSI consists of a core antenna complex that captures photons, and an electron transfer chain that converts photonic excitation into a charge separation. The eukaryotic PSI reaction center is composed of at least 11 subunits. P700 is a chlorophyll a/chlorophyll a' dimer, A0 is one or more chlorophyll a, A1 is one or both phylloquinones and FX is a shared 4Fe-4S iron-sulfur center. is required as a cofactor.

It is found in the plastid. The protein localises to the chloroplast thylakoid membrane. The catalysed reaction is reduced [plastocyanin] + hnu + oxidized [2Fe-2S]-[ferredoxin] = oxidized [plastocyanin] + reduced [2Fe-2S]-[ferredoxin]. PsaA and PsaB bind P700, the primary electron donor of photosystem I (PSI), as well as the electron acceptors A0, A1 and FX. PSI is a plastocyanin/cytochrome c6-ferredoxin oxidoreductase, converting photonic excitation into a charge separation, which transfers an electron from the donor P700 chlorophyll pair to the spectroscopically characterized acceptors A0, A1, FX, FA and FB in turn. Oxidized P700 is reduced on the lumenal side of the thylakoid membrane by plastocyanin or cytochrome c6. The protein is Photosystem I P700 chlorophyll a apoprotein A2 of Trieres chinensis (Marine centric diatom).